We begin with the raw amino-acid sequence, 422 residues long: Synaptotagmin-2 (422 aa).

Residues 1 to 43 form a disordered region; that stretch reads MRNIFKRNQEPNVAPATTTATMPLAPVAPADNSTESTGPGESQ. The Vesicular segment spans residues 1 to 60; that stretch reads MRNIFKRNQEPNVAPATTTATMPLAPVAPADNSTESTGPGESQEDMFAKLKEKFFNEINK. Low complexity predominate over residues 14-30; the sequence is APATTTATMPLAPVAPA. The segment covering 31–40 has biased composition (polar residues); the sequence is DNSTESTGPG. An N-linked (GlcNAc...) asparagine glycan is attached at Asn32. Residues 61 to 87 form a helical membrane-spanning segment; the sequence is IPLPPWALIAMAVVAGLLLLTCCFCIC. Topologically, residues 88–422 are cytoplasmic; sequence KKCCCKKKKN…EVDALLGKNK (335 aa). Residues 102 to 141 form a disordered region; the sequence is GKGMKNAMNMKDMKGGQDDDDAETGLTEGEGEGEEEKEPE. Acidic residues predominate over residues 119–139; it reads DDDDAETGLTEGEGEGEEEKE. Residues Thr125 and Thr128 each carry the phosphothreonine modification. The interval 136–382 is phospholipid binding; the sequence is EEKEPENLGK…AIGKIFVGSN (247 aa). C2 domains are found at residues 142-261 and 273-406; these read NLGK…EEWR and KLGD…AQWH. Ca(2+) contacts are provided by Leu172, Asp173, and Asp179. The residue at position 202 (Thr202) is a Phosphothreonine. The residue at position 230 (Tyr230) is a Phosphotyrosine. 10 residues coordinate Ca(2+): Asp231, Phe232, Asp233, Ser236, Lys237, Asp239, Asp304, Asp310, Asp364, and Asp366. Phosphothreonine is present on Thr386.

This sequence belongs to the synaptotagmin family. As to quaternary structure, homotetramer. Heterodimer; heterodimerizes with SYT1 in presence of calcium. Interacts with SCAMP5. Interacts with STON2. Interacts with PRRT2. (Microbial infection) Interacts with C.botulinum neurotoxin type B (BoNT/B, botB). In terms of assembly, (Microbial infection) Interacts with C.botulinum neurotoxin type G (BoNT/G, botG). Requires Ca(2+) as cofactor. Post-translationally, phosphorylation at Thr-202 by WNK1, changes the calcium requirement for SYT2-binding to phospholipid membranes.

It is found in the cytoplasmic vesicle. The protein resides in the secretory vesicle. Its subcellular location is the synaptic vesicle membrane. The protein localises to the chromaffin granule membrane. It localises to the cytoplasm. Exhibits calcium-dependent phospholipid and inositol polyphosphate binding properties. May have a regulatory role in the membrane interactions during trafficking of synaptic vesicles at the active zone of the synapse. Plays a role in dendrite formation by melanocytes. Its function is as follows. (Microbial infection) Receptor for C.botulinum neurotoxin type B (BoNT/B, botB); interaction is improved in the presence of gangliosides. The toxin binds via the vesicular domain (residues 47-60). Functionally, (Microbial infection) Receptor for C.botulinum neurotoxin type G (BoNT/G, botG); gangliosides are not required for (or only very slightly improve) binding to a membrane-anchored receptor fragment. The toxin binds via the vesicular domain (residues 47-55). This is Synaptotagmin-2 from Mus musculus (Mouse).